We begin with the raw amino-acid sequence, 124 residues long: Small ribosomal subunit protein bS6 (124 aa).

The segment at P99–A124 is disordered. Low complexity predominate over residues V114 to A124.

The protein belongs to the bacterial ribosomal protein bS6 family.

Binds together with bS18 to 16S ribosomal RNA. The protein is Small ribosomal subunit protein bS6 of Prochlorococcus marinus (strain MIT 9303).